We begin with the raw amino-acid sequence, 71 residues long: uncharacterized protein (71 aa).

Residues 52–71 form a disordered region; that stretch reads KEKFERKEDEKSKPKGVRED.

This is an uncharacterized protein from Archaeoglobus fulgidus (strain ATCC 49558 / DSM 4304 / JCM 9628 / NBRC 100126 / VC-16).